Consider the following 236-residue polypeptide: Phosphoribosylaminoimidazole-succinocarboxamide synthase (236 aa).

It belongs to the SAICAR synthetase family.

It carries out the reaction 5-amino-1-(5-phospho-D-ribosyl)imidazole-4-carboxylate + L-aspartate + ATP = (2S)-2-[5-amino-1-(5-phospho-beta-D-ribosyl)imidazole-4-carboxamido]succinate + ADP + phosphate + 2 H(+). The protein operates within purine metabolism; IMP biosynthesis via de novo pathway; 5-amino-1-(5-phospho-D-ribosyl)imidazole-4-carboxamide from 5-amino-1-(5-phospho-D-ribosyl)imidazole-4-carboxylate: step 1/2. The polypeptide is Phosphoribosylaminoimidazole-succinocarboxamide synthase (Pseudomonas putida (strain ATCC 700007 / DSM 6899 / JCM 31910 / BCRC 17059 / LMG 24140 / F1)).